Consider the following 508-residue polypeptide: tRNA-2-methylthio-N(6)-dimethylallyladenosine synthase (508 aa).

The region spanning 13 to 131 is the MTTase N-terminal domain; that stretch reads KTYEVRTYGC…LPVLLERARV (119 aa). [4Fe-4S] cluster-binding residues include Cys22, Cys60, Cys94, Cys168, Cys172, and Cys175. A Radical SAM core domain is found at 154–385; that stretch reads RESAYAAWVS…ALQEEISWDE (232 aa). The TRAM domain maps to 387 to 455; sequence KKQVGRTLEL…PHHLLAEGPV (69 aa).

The protein belongs to the methylthiotransferase family. MiaB subfamily. In terms of assembly, monomer. Requires [4Fe-4S] cluster as cofactor.

The protein localises to the cytoplasm. The enzyme catalyses N(6)-dimethylallyladenosine(37) in tRNA + (sulfur carrier)-SH + AH2 + 2 S-adenosyl-L-methionine = 2-methylsulfanyl-N(6)-dimethylallyladenosine(37) in tRNA + (sulfur carrier)-H + 5'-deoxyadenosine + L-methionine + A + S-adenosyl-L-homocysteine + 2 H(+). Its function is as follows. Catalyzes the methylthiolation of N6-(dimethylallyl)adenosine (i(6)A), leading to the formation of 2-methylthio-N6-(dimethylallyl)adenosine (ms(2)i(6)A) at position 37 in tRNAs that read codons beginning with uridine. The polypeptide is tRNA-2-methylthio-N(6)-dimethylallyladenosine synthase (Streptomyces avermitilis (strain ATCC 31267 / DSM 46492 / JCM 5070 / NBRC 14893 / NCIMB 12804 / NRRL 8165 / MA-4680)).